A 187-amino-acid polypeptide reads, in one-letter code: Large ribosomal subunit protein uL13 (187 aa).

It belongs to the universal ribosomal protein uL13 family.

This chain is Large ribosomal subunit protein uL13 (rpl13a), found in Dictyostelium discoideum (Social amoeba).